Consider the following 96-residue polypeptide: Large ribosomal subunit protein eL21 (96 aa).

The segment at 1 to 37 (MPSSNGPMTGTRDKLSNSPRERGMSPPQRAIQEYDEG) is disordered. Over residues 11–23 (TRDKLSNSPRERG) the composition is skewed to basic and acidic residues.

This sequence belongs to the eukaryotic ribosomal protein eL21 family.

This chain is Large ribosomal subunit protein eL21, found in Haloquadratum walsbyi (strain DSM 16790 / HBSQ001).